We begin with the raw amino-acid sequence, 250 residues long: UPF0259 membrane protein bbp_256 (250 aa).

6 consecutive transmembrane segments (helical) span residues 21–41 (PIIV…DSII), 86–106 (FSLL…IQMT), 125–145 (FFKL…GFLL), 146–166 (YFIP…ILLI), 188–208 (IIVP…LIIS), and 216–236 (FLAY…LIIY).

It belongs to the UPF0259 family.

It is found in the cell membrane. The chain is UPF0259 membrane protein bbp_256 from Buchnera aphidicola subsp. Baizongia pistaciae (strain Bp).